The chain runs to 882 residues: Alanine--tRNA ligase (882 aa).

The Zn(2+) site is built by histidine 568, histidine 572, cysteine 670, and histidine 674.

This sequence belongs to the class-II aminoacyl-tRNA synthetase family. Requires Zn(2+) as cofactor.

The protein resides in the cytoplasm. It catalyses the reaction tRNA(Ala) + L-alanine + ATP = L-alanyl-tRNA(Ala) + AMP + diphosphate. Functionally, catalyzes the attachment of alanine to tRNA(Ala) in a two-step reaction: alanine is first activated by ATP to form Ala-AMP and then transferred to the acceptor end of tRNA(Ala). Also edits incorrectly charged Ser-tRNA(Ala) and Gly-tRNA(Ala) via its editing domain. This is Alanine--tRNA ligase from Lactobacillus johnsonii (strain CNCM I-12250 / La1 / NCC 533).